Consider the following 696-residue polypeptide: Gametogenetin-binding protein 2 (696 aa).

A Phosphoserine modification is found at serine 360.

Interacts with GGN.

Its subcellular location is the cytoplasmic vesicle. In terms of biological role, may be involved in spermatogenesis. This is Gametogenetin-binding protein 2 (Ggnbp2) from Rattus norvegicus (Rat).